Reading from the N-terminus, the 578-residue chain is MKDTIRQLIQQALTQLVNEGVLPEGLTPAIQVENTRDKTHGDFASNIAMMLSKPAGMKPRDLAEKIIAALPVDDSVTKAEIAGPGFINFFQNTQALAGRLDAALADARVGVRKAGPAQRTVVDLSAPNLAKEMHVGHLRSTIIGDGVARVLEFLGDEVVRQNHVGDWGTQFGMLMAYLQENPITSDELSDLENFYRAAKKRFDESEAFADRARGLVVKLQAGDAECLALWTKFKDISLSHCQKIYELLNVKLTMADVMGESAYNDDLINVVNDLKAAGMLVESNGAQCVFLDEFKNADGEPLPVIIVKADGGYLYATTDLAAVRYRSGTLKADRALYFVDQRQALHFQQVFAVARKAGFVTHPMDMEHMGFGTMNGADGRPFKTRDGGTVKLIDLLTEAQERAYTLVKEKNPELAEADLRNIARVVGIGAVKYADLSKHRTSDYSFNFDLMLNFEGNTAPYLLYAYTRVAGVFRKLGKDFSEVEGQIDLQASHEQELAAKLAQFGEVLNSVGEKGTPHILCTYLYEVAGLFSSFYENCPILTADDEAQKQSRLRLAALAGRTLKQGLELLGLETLERM.

The 'HIGH' region motif lies at 127–137; that stretch reads PNLAKEMHVGH.

This sequence belongs to the class-I aminoacyl-tRNA synthetase family. Monomer.

It localises to the cytoplasm. It carries out the reaction tRNA(Arg) + L-arginine + ATP = L-arginyl-tRNA(Arg) + AMP + diphosphate. This is Arginine--tRNA ligase from Pseudomonas fluorescens (strain SBW25).